Consider the following 465-residue polypeptide: UDP-N-acetylmuramoylalanine--D-glutamate ligase (465 aa).

Residue 127 to 133 (GSNGKST) coordinates ATP.

Belongs to the MurCDEF family.

The protein resides in the cytoplasm. It catalyses the reaction UDP-N-acetyl-alpha-D-muramoyl-L-alanine + D-glutamate + ATP = UDP-N-acetyl-alpha-D-muramoyl-L-alanyl-D-glutamate + ADP + phosphate + H(+). It participates in cell wall biogenesis; peptidoglycan biosynthesis. Cell wall formation. Catalyzes the addition of glutamate to the nucleotide precursor UDP-N-acetylmuramoyl-L-alanine (UMA). This chain is UDP-N-acetylmuramoylalanine--D-glutamate ligase, found in Cereibacter sphaeroides (strain KD131 / KCTC 12085) (Rhodobacter sphaeroides).